Consider the following 331-residue polypeptide: UPF0194 membrane protein YbhG (331 aa).

The N-terminal stretch at 1–19 (MKKPVVIGLVIAAIVAVIA) is a signal peptide. Residues 140–209 (RTISANDLEN…DLQDTTLIAP (70 aa)) are a coiled coil.

It belongs to the UPF0194 family.

Its subcellular location is the periplasm. This is UPF0194 membrane protein YbhG (ybhG) from Salmonella typhi.